The primary structure comprises 213 residues: Protein-L-isoaspartate O-methyltransferase (213 aa).

Serine 58 is an active-site residue.

It belongs to the methyltransferase superfamily. L-isoaspartyl/D-aspartyl protein methyltransferase family.

Its subcellular location is the cytoplasm. The enzyme catalyses [protein]-L-isoaspartate + S-adenosyl-L-methionine = [protein]-L-isoaspartate alpha-methyl ester + S-adenosyl-L-homocysteine. In terms of biological role, catalyzes the methyl esterification of L-isoaspartyl residues in peptides and proteins that result from spontaneous decomposition of normal L-aspartyl and L-asparaginyl residues. It plays a role in the repair and/or degradation of damaged proteins. In Chlorobaculum tepidum (strain ATCC 49652 / DSM 12025 / NBRC 103806 / TLS) (Chlorobium tepidum), this protein is Protein-L-isoaspartate O-methyltransferase.